The chain runs to 207 residues: Succinyl-CoA:3-ketoacid coenzyme A transferase subunit B (207 aa).

Residue Glu-43 is part of the active site.

Belongs to the 3-oxoacid CoA-transferase subunit B family. Heterodimer of a subunit A and a subunit B.

The catalysed reaction is a 3-oxo acid + succinyl-CoA = a 3-oxoacyl-CoA + succinate. In Helicobacter pylori (strain ATCC 700392 / 26695) (Campylobacter pylori), this protein is Succinyl-CoA:3-ketoacid coenzyme A transferase subunit B (scoB).